The primary structure comprises 344 residues: DNA polymerase III subunit delta (344 aa).

The protein belongs to the DNA polymerase HolA subunit family. In terms of assembly, DNA polymerase III contains a core (composed of alpha, epsilon and theta chains) that associates with a tau subunit. This core dimerizes to form the POLIII' complex. PolIII' associates with the gamma complex (composed of gamma, delta, delta', psi and chi chains) and with the beta chain to form the complete DNA polymerase III complex.

The catalysed reaction is DNA(n) + a 2'-deoxyribonucleoside 5'-triphosphate = DNA(n+1) + diphosphate. Its function is as follows. DNA polymerase III is a complex, multichain enzyme responsible for most of the replicative synthesis in bacteria. This DNA polymerase also exhibits 3' to 5' exonuclease activity. The delta subunit seems to interact with the gamma subunit to transfer the beta subunit on the DNA. This Haemophilus influenzae (strain ATCC 51907 / DSM 11121 / KW20 / Rd) protein is DNA polymerase III subunit delta (holA).